We begin with the raw amino-acid sequence, 178 residues long: Single-stranded DNA-binding protein 2 (178 aa).

In terms of domain architecture, SSB spans 6-111 (VNKVILVGNL…VVVSQSGTMQ (106 aa)). Residues 55 to 61 (WHRVVLY) mediate DNA binding. The interval 111–161 (QMLGGRNSAGSGQQQGGWGQPQQPAAPSHSGMPPQQHPANEPPMDFDDDIP) is disordered.

Homotetramer.

This Salmonella typhi protein is Single-stranded DNA-binding protein 2 (ssb2).